A 278-amino-acid chain; its full sequence is Soluble NSF attachment protein homolog FPV011 (278 aa).

Belongs to the SNAP family.

The protein is Soluble NSF attachment protein homolog FPV011 of Fowlpox virus (strain NVSL) (FPV).